The chain runs to 198 residues: Protein C4 (198 aa).

The disordered stretch occupies residues 1 to 36 (MFNPRHPGGEFFGRKHHRRHAPDGRSSSSSSSSSEC).

In Giardia intestinalis (Giardia lamblia), this protein is Protein C4 (C4).